The sequence spans 247 residues: DNA polymerase sliding clamp (247 aa).

The protein belongs to the PCNA family. As to quaternary structure, homotrimer. The subunits circularize to form a toroid; DNA passes through its center. Replication factor C (RFC) is required to load the toroid on the DNA.

Functionally, sliding clamp subunit that acts as a moving platform for DNA processing. Responsible for tethering the catalytic subunit of DNA polymerase and other proteins to DNA during high-speed replication. This is DNA polymerase sliding clamp from Halobacterium salinarum (strain ATCC 29341 / DSM 671 / R1).